Here is a 214-residue protein sequence, read N- to C-terminus: Alkaline phosphatase-like protein (214 aa).

A run of 4 helical transmembrane segments spans residues E3–I23, L48–L68, F141–A161, and Y177–V197.

This sequence belongs to the DedA family.

The protein localises to the cell membrane. The polypeptide is Alkaline phosphatase-like protein (apl) (Lactococcus lactis subsp. cremoris (strain MG1363)).